The chain runs to 1096 residues: Pullulanase (1096 aa).

An N-terminal signal peptide occupies residues 1-19 (MLRYTCHALFLGSLVLLSG). Residue cysteine 20 is the site of N-palmitoyl cysteine attachment. Cysteine 20 carries the S-diacylglycerol cysteine lipid modification. Positions 24 to 34 (SSSSTSGSPGS) are enriched in low complexity. Residues 24 to 50 (SSSSTSGSPGSPGNPGNPGTPGTPDPQ) form a disordered region. Aspartate 694 acts as the Nucleophile in catalysis. The Proton donor role is filled by glutamate 723. The segment at 1014 to 1044 (QAGRQSGQPCRRHRGGDQRRAGKPDAAGLRR) is disordered.

The protein belongs to the glycosyl hydrolase 13 family. Homotrimer.

It localises to the cell membrane. The catalysed reaction is Hydrolysis of (1-&gt;6)-alpha-D-glucosidic linkages in pullulan, amylopectin and glycogen, and in the alpha- and beta-limit dextrins of amylopectin and glycogen.. The protein is Pullulanase (pulA) of Klebsiella aerogenes (Enterobacter aerogenes).